Consider the following 721-residue polypeptide: MTNPMVEQGASQLMGGSAMPPEQHGEMPEQNLKRLSEGFPRDAIQTGGVKSCSWRRVFVVGFALLISAFAIFEMRGVFLVGGLTPIEYAVLVLFAINFCWIALAFSSSIAGFFVLASRKPAPNTEQPLTTRTAILMPTYNEAPDRVFAAVETMALALAKTEHGHAFDWFILSDTTDPEVALSEEQAFWLLRQQTAGKANVYYRRRRKNIARKAGNIADFCRRWGSGYDHLLVLDADSVMQPSTMISLAQRMQSDPDAGLIQTIPALINGTTLMARVQQFAARIYGPVVGTGLAWWVQKEGNFWGHNAIIRTEAFMSAAGLPHLSGRPPFGGHILSHDFVEAALIRRAGWSVTIAADLSGSFEECPPSIIDLAVRDRRWCQGNLQHSRIIGTKGLHWISRLHLTTGIMSYLSSPFWLLLILSGLLLALQAHFIRPEYFTEQFSLFPTWPVMDSARALQLFYITMGILFSPKIFGLLLLMFDGEMCRTLGGRLRVILSAVTEILLSALVAPIMMLIHCGAVVSILFGRDSGWAPQRRDDGSLPIKDLLYRHRWHMTAGVLLGYAAMLDSWTLLAWMSPALIGLWFSVPLSGITASYTIGAWFKQKRILATPEEIETPAIVLAAQARRDEYVVDLQEVWNARMVLADHNLIALHIAMMDKLPSRQPGTAIEPLDAVARIKVQEAESQESLLALLTKVELSYVLGNPLLIQQVAKLPPSLANQTV.

Transmembrane regions (helical) follow at residues 52 to 72, 97 to 117, 412 to 432, 459 to 479, 505 to 525, and 570 to 590; these read CSWR…FAIF, NFCW…VLAS, SPFW…AHFI, FYIT…LLMF, ALVA…ILFG, and LLAW…LSGI.

It belongs to the glycosyltransferase 2 family. OpgH subfamily.

Its subcellular location is the cell inner membrane. It participates in glycan metabolism; osmoregulated periplasmic glucan (OPG) biosynthesis. In terms of biological role, involved in the biosynthesis of osmoregulated periplasmic glucans (OPGs). The polypeptide is Glucans biosynthesis glucosyltransferase H (Vibrio cholerae serotype O1 (strain ATCC 39541 / Classical Ogawa 395 / O395)).